We begin with the raw amino-acid sequence, 122 residues long: NADPH-dependent 7-cyano-7-deazaguanine reductase (122 aa).

Residue Cys-34 is the Thioimide intermediate of the active site. Asp-41 serves as the catalytic Proton donor. Residues Val-56 to Leu-58 and His-75 to Glu-76 each bind substrate.

The protein belongs to the GTP cyclohydrolase I family. QueF type 1 subfamily.

Its subcellular location is the cytoplasm. The enzyme catalyses 7-aminomethyl-7-carbaguanine + 2 NADP(+) = 7-cyano-7-deazaguanine + 2 NADPH + 3 H(+). Its pathway is tRNA modification; tRNA-queuosine biosynthesis. Catalyzes the NADPH-dependent reduction of 7-cyano-7-deazaguanine (preQ0) to 7-aminomethyl-7-deazaguanine (preQ1). This Anaeromyxobacter sp. (strain Fw109-5) protein is NADPH-dependent 7-cyano-7-deazaguanine reductase.